A 203-amino-acid chain; its full sequence is FMN-dependent NADH:quinone oxidoreductase (203 aa).

FMN is bound by residues serine 9, 15–17 (SVS), and 138–141 (SRGG).

It belongs to the azoreductase type 1 family. In terms of assembly, homodimer. Requires FMN as cofactor.

It catalyses the reaction 2 a quinone + NADH + H(+) = 2 a 1,4-benzosemiquinone + NAD(+). It carries out the reaction N,N-dimethyl-1,4-phenylenediamine + anthranilate + 2 NAD(+) = 2-(4-dimethylaminophenyl)diazenylbenzoate + 2 NADH + 2 H(+). Its function is as follows. Quinone reductase that provides resistance to thiol-specific stress caused by electrophilic quinones. Also exhibits azoreductase activity. Catalyzes the reductive cleavage of the azo bond in aromatic azo compounds to the corresponding amines. This chain is FMN-dependent NADH:quinone oxidoreductase, found in Methylorubrum populi (strain ATCC BAA-705 / NCIMB 13946 / BJ001) (Methylobacterium populi).